The primary structure comprises 525 residues: Chromosomal replication initiator protein DnaA (525 aa).

A domain I, interacts with DnaA modulators region spans residues Met-1 to Thr-71. Residues Thr-71–Ser-188 form a domain II region. Residues Ala-162 to Asp-182 form a disordered region. Over residues Pro-169–Ala-181 the composition is skewed to low complexity. The domain III, AAA+ region stretch occupies residues Lys-189–Ser-405. ATP contacts are provided by Gly-233, Gly-235, Lys-236, and Thr-237. Residues Lys-406–Gly-525 form a domain IV, binds dsDNA region.

This sequence belongs to the DnaA family. As to quaternary structure, oligomerizes as a right-handed, spiral filament on DNA at oriC.

The protein resides in the cytoplasm. Its function is as follows. Plays an essential role in the initiation and regulation of chromosomal replication. ATP-DnaA binds to the origin of replication (oriC) to initiate formation of the DNA replication initiation complex once per cell cycle. Binds the DnaA box (a 9 base pair repeat at the origin) and separates the double-stranded (ds)DNA. Forms a right-handed helical filament on oriC DNA; dsDNA binds to the exterior of the filament while single-stranded (ss)DNA is stabiized in the filament's interior. The ATP-DnaA-oriC complex binds and stabilizes one strand of the AT-rich DNA unwinding element (DUE), permitting loading of DNA polymerase. After initiation quickly degrades to an ADP-DnaA complex that is not apt for DNA replication. Binds acidic phospholipids. This chain is Chromosomal replication initiator protein DnaA, found in Burkholderia cenocepacia (strain HI2424).